The following is a 391-amino-acid chain: Mannose-6-phosphate isomerase (391 aa).

Positions 97, 99, 134, and 255 each coordinate Zn(2+). Arg274 is an active-site residue.

The protein belongs to the mannose-6-phosphate isomerase type 1 family. Zn(2+) is required as a cofactor.

The protein localises to the cytoplasm. The enzyme catalyses D-mannose 6-phosphate = D-fructose 6-phosphate. Functionally, involved in the conversion of glucose to GDP-L-fucose, which can be converted to L-fucose, a capsular polysaccharide. This Salmonella typhimurium (strain LT2 / SGSC1412 / ATCC 700720) protein is Mannose-6-phosphate isomerase (manA).